The chain runs to 45 residues: MSHCAGLLVLACASWCYSVLLPIVYSSATLQYRPSVRYIYTLYII.

This is an uncharacterized protein from Acidianus two-tailed virus (ATV).